Reading from the N-terminus, the 568-residue chain is Vitamin H transporter 1 (568 aa).

12 helical membrane-spanning segments follow: residues 85 to 105 (IIPC…TVSL), 123 to 143 (GYSA…YIIF), 158 to 178 (IWVS…AVLG), 187 to 207 (YVAL…GLAY), 222 to 242 (IGWY…VSAG), 257 to 277 (WMFL…PWWL), 345 to 365 (VWPF…IFNY), 384 to 404 (LLNA…MPLY), 411 to 431 (FSFF…ANYA), 439 to 459 (GGLL…MAWC), 470 to 490 (VGVA…SVVT), and 508 to 528 (NDVC…EFLL). A disordered region spans residues 547-568 (VEDEQEMTDIKPALPSSQQADA).

This sequence belongs to the major facilitator superfamily. Allantoate permease family.

It localises to the membrane. Functionally, involved in uptake of biotin and desthiobiotin with the concomitant entry of protons. In Schizosaccharomyces pombe (strain 972 / ATCC 24843) (Fission yeast), this protein is Vitamin H transporter 1 (vht1).